Reading from the N-terminus, the 116-residue chain is Ribosome-binding factor A (116 aa).

This sequence belongs to the RbfA family. As to quaternary structure, monomer. Binds 30S ribosomal subunits, but not 50S ribosomal subunits or 70S ribosomes.

It localises to the cytoplasm. Functionally, one of several proteins that assist in the late maturation steps of the functional core of the 30S ribosomal subunit. Associates with free 30S ribosomal subunits (but not with 30S subunits that are part of 70S ribosomes or polysomes). Required for efficient processing of 16S rRNA. May interact with the 5'-terminal helix region of 16S rRNA. This is Ribosome-binding factor A from Streptococcus equi subsp. zooepidemicus (strain H70).